The primary structure comprises 646 residues: Peptidylprolyl isomerase domain and WD repeat-containing protein 1 (646 aa).

Positions 1-50 (MATESGSDSQLRRRRRRDPEGSEKTELSEREPALAVAGSEENDDENEERW) are disordered. Ala-2 is subject to N-acetylalanine. A compositionally biased stretch (basic and acidic residues) spans 17-32 (RDPEGSEKTELSEREP). 4 WD repeats span residues 88 to 126 (MHRD…IEFV), 131 to 170 (SHLG…MINM), 221 to 260 (LHVS…YKFP), and 278 to 319 (KCKA…RVFD). One can recognise a PPIase cyclophilin-type domain in the interval 490–645 (VSDSAIVHTS…EDVSIINITV (156 aa)).

This sequence belongs to the cyclophilin-type PPIase family. PPIL1 subfamily. In terms of assembly, identified in the spliceosome C complex.

The protein localises to the nucleus. It carries out the reaction [protein]-peptidylproline (omega=180) = [protein]-peptidylproline (omega=0). Inhibited by cyclosporin A (CsA). Its function is as follows. PPIase that catalyzes the cis-trans isomerization of proline imidic peptide bonds in oligopeptides and may therefore assist protein folding. May be involved in pre-mRNA splicing. This is Peptidylprolyl isomerase domain and WD repeat-containing protein 1 from Mus musculus (Mouse).